The following is a 394-amino-acid chain: Actin-related protein 2-A (394 aa).

ATP is bound by residues 160-162 (GDG), 214-218 (RMIKE), and 305-310 (GGSTMY).

The protein belongs to the actin family. ARP2 subfamily. As to quaternary structure, component of the Arp2/3 complex composed of actr2/arp2, actr3/arp3, arpc1 (arpc1a or arpc1b), arpc2, arpc3, arpc4 and arpc5.

Its subcellular location is the cytoplasm. The protein localises to the cytoskeleton. It localises to the cell projection. It is found in the nucleus. In terms of biological role, ATP-binding component of the Arp2/3 complex, a multiprotein complex that mediates actin polymerization upon stimulation by nucleation-promoting factor (NPF). The Arp2/3 complex mediates the formation of branched actin networks in the cytoplasm, providing the force for cell motility. Seems to contact the pointed end of the daughter actin filament. In addition to its role in the cytoplasmic cytoskeleton, the Arp2/3 complex also promotes actin polymerization in the nucleus, thereby regulating gene transcription and repair of damaged DNA. The Arp2/3 complex promotes homologous recombination (HR) repair in response to DNA damage by promoting nuclear actin polymerization, leading to drive motility of double-strand breaks (DSBs). This Xenopus laevis (African clawed frog) protein is Actin-related protein 2-A (actr2-a).